A 562-amino-acid polypeptide reads, in one-letter code: Putative transport protein PC1_1686 (562 aa).

Helical transmembrane passes span 8 to 28 (LLNGNYILLLFVVLSLGLCLG), 32 to 52 (LGPVQLGNSIGVLVVSLLLGQ), 66 to 86 (FMLFIFCVGVEAGPNFFSIFF), 93 to 113 (FMLALVMVGSAMLLALGLGKF), 116 to 136 (WGIGLTAGMLAGSMTSTPVLV), and 158 to 178 (HLSLGYALTYLVGLVSLIFGA). RCK C-terminal domains follow at residues 202–288 (LDAD…NFRD) and 292–373 (VFDR…RIGF). 5 helical membrane passes run 383–403 (LLAFCAFFVIGIMVGLITIQF), 406–426 (FTFGIGNAAGLLFAGIMLGFL), 447–467 (FGLMVFMAGVGLSAGSTINSS), 478–498 (SGLIVSLVPVVICFLFGAYVL), and 537–557 (GTYAIANVLLTLAGSLIVIIW).

It belongs to the AAE transporter (TC 2.A.81) family. YbjL subfamily.

It is found in the cell membrane. In Pectobacterium carotovorum subsp. carotovorum (strain PC1), this protein is Putative transport protein PC1_1686.